The sequence spans 119 residues: MIVGHGIDLQEMEAIESARIKHQGFPKKILTEKEFERYQSLSGRRQLEYLAGRWSAKEALTKALGTGIGKIGFHDIEILNTSKGVPYVTKSPFDGNIWLSISHSGNFVQASVILEEKDD.

The Mg(2+) site is built by Asp-8 and Glu-58.

It belongs to the P-Pant transferase superfamily. AcpS family. Requires Mg(2+) as cofactor.

Its subcellular location is the cytoplasm. It carries out the reaction apo-[ACP] + CoA = holo-[ACP] + adenosine 3',5'-bisphosphate + H(+). Its function is as follows. Transfers the 4'-phosphopantetheine moiety from coenzyme A to a Ser of acyl-carrier-protein. In Streptococcus suis (strain 05ZYH33), this protein is Holo-[acyl-carrier-protein] synthase.